A 224-amino-acid chain; its full sequence is MNTQFKLIGFDLDGTLVNSLPDLALSVNSALAEFNLPKAPEELVLTWIGNGAPVLIARALDWAKKQTGKVLTETEVKQVTERFNFYYGENLCNVSRLYPNVKETLETLKEKGYVLAVVTNKPTRHVQPVLAAFGIDHLFSEMLGGQSLPAIKPHPAPLYYLCGKFGFEPRQVLFVGDSKNDIIAAHAAGCAVVGLTYGYNYNIPITESNPDWVFDDFAQLLTIL.

Aspartate 11 acts as the Nucleophile in catalysis. Aspartate 11, aspartate 13, and aspartate 177 together coordinate Mg(2+).

Belongs to the HAD-like hydrolase superfamily. CbbY/CbbZ/Gph/YieH family. Mg(2+) serves as cofactor.

The enzyme catalyses 2-phosphoglycolate + H2O = glycolate + phosphate. The protein operates within organic acid metabolism; glycolate biosynthesis; glycolate from 2-phosphoglycolate: step 1/1. Specifically catalyzes the dephosphorylation of 2-phosphoglycolate. Is involved in the dissimilation of the intracellular 2-phosphoglycolate formed during the DNA repair of 3'-phosphoglycolate ends, a major class of DNA lesions induced by oxidative stress. This is Phosphoglycolate phosphatase from Haemophilus influenzae (strain 86-028NP).